We begin with the raw amino-acid sequence, 493 residues long: 5'-3' exonuclease PLD3 (493 aa).

The Cytoplasmic segment spans residues 1 to 37 (MSSKVEYKPIQPHEEAENHFLQHELHKVKARKYYRCA). A helical; Signal-anchor for type II membrane protein transmembrane segment spans residues 38–58 (LVVAIIITLVFCILASQLLLF). The Lumenal segment spans residues 59–493 (PFLSITSQTT…LSSWKEKCIF (435 aa)). A glycan (N-linked (GlcNAc...) asparagine) is linked at N99. The 28-residue stretch at 197 to 224 (TDGILHTKFWVVDNEHFYIGSANMDWRS) folds into the PLD phosphodiesterase 1 domain. Residues H202, K204, and D209 contribute to the active site. N-linked (GlcNAc...) asparagine glycosylation is found at N237, N259, N269, N285, and N388. In terms of domain architecture, PLD phosphodiesterase 2 spans 412 to 438 (YARVNHNKYMVTDRVAYIGTSNWSGDY). Residues H417, K419, and D424 contribute to the active site. 3 N-linked (GlcNAc...) asparagine glycosylation sites follow: N433, N450, and N476.

The protein belongs to the phospholipase D family. Post-translationally, N-glycosylated. Proteolytically processed to a soluble form that is stable within endosomes and lysosomes. During transport through the secretory pathway becomes proteolysed by cysteine proteases, thereby releasing a stable soluble lysosomal lumenal polypeptide, whereas the transmembrane-bound fragment is rapidly degraded. Its transport route to lysosomes involves ubiquitination and the ESCRT complex. In terms of processing, ubiquitinated. Ubiquitination mediates sorting into lysosomes.

Its subcellular location is the endoplasmic reticulum membrane. The protein localises to the lysosome lumen. It is found in the early endosome membrane. The protein resides in the late endosome membrane. It localises to the golgi apparatus membrane. Its subcellular location is the endosome membrane. The enzyme catalyses Exonucleolytic cleavage in the 5'- to 3'-direction to yield nucleoside 3'-phosphates.. Functionally, 5'-&gt;3' DNA exonuclease which digests single-stranded DNA (ssDNA). Regulates inflammatory cytokine responses via the degradation of nucleic acids, by reducing the concentration of ssDNA able to stimulate TLR9, a nucleotide-sensing receptor in collaboration with PLD4. May be important in myotube formation. Plays a role in lysosomal homeostasis. Involved in the regulation of endosomal protein sorting. The sequence is that of 5'-3' exonuclease PLD3 (pld3) from Xenopus laevis (African clawed frog).